We begin with the raw amino-acid sequence, 225 residues long: GrpE protein homolog 2, mitochondrial (225 aa).

The transit peptide at 1 to 32 (MAVRSLWAGRLRVQRLLAWSAAWESKGWPLPF) directs the protein to the mitochondrion. An N6-acetyllysine modification is found at lysine 142.

It belongs to the GrpE family. As to quaternary structure, probable component of the PAM complex at least composed of a mitochondrial HSP70 protein, GRPEL1 or GRPEL2, TIMM44, TIMM16/PAM16 and TIMM14/DNAJC19.

It is found in the mitochondrion matrix. Functionally, essential component of the PAM complex, a complex required for the translocation of transit peptide-containing proteins from the inner membrane into the mitochondrial matrix in an ATP-dependent manner. Seems to control the nucleotide-dependent binding of mitochondrial HSP70 to substrate proteins. Stimulates ATPase activity of mt-HSP70. May also serve to modulate the interconversion of oligomeric (inactive) and monomeric (active) forms of mt-HSP70. The polypeptide is GrpE protein homolog 2, mitochondrial (GRPEL2) (Homo sapiens (Human)).